The chain runs to 599 residues: Sulfite reductase [NADPH] flavoprotein alpha-component (599 aa).

The 139-residue stretch at 63 to 201 (ITVISASQTG…LATAWRKQVV (139 aa)) folds into the Flavodoxin-like domain. Residues 69-74 (SQTGNA), 116-119 (STQG), and 152-161 (LGDTSYENFC) contribute to the FMN site. In terms of domain architecture, FAD-binding FR-type spans 234–448 (EQPLTAQLAV…IEHNDNFRLP (215 aa)). FAD is bound by residues Thr322, His356, 386 to 389 (RLYS), 404 to 406 (TVG), Tyr410, and 419 to 422 (GGAS). NADP(+) is bound by residues 519–520 (SR), 525–529 (KVYVQ), and Asp561. Tyr599 is a binding site for FAD.

It belongs to the NADPH-dependent sulphite reductase flavoprotein subunit CysJ family. This sequence in the N-terminal section; belongs to the flavodoxin family. The protein in the C-terminal section; belongs to the flavoprotein pyridine nucleotide cytochrome reductase family. As to quaternary structure, alpha(8)-beta(8). The alpha component is a flavoprotein, the beta component is a hemoprotein. Requires FAD as cofactor. It depends on FMN as a cofactor.

The catalysed reaction is hydrogen sulfide + 3 NADP(+) + 3 H2O = sulfite + 3 NADPH + 4 H(+). It functions in the pathway sulfur metabolism; hydrogen sulfide biosynthesis; hydrogen sulfide from sulfite (NADPH route): step 1/1. In terms of biological role, component of the sulfite reductase complex that catalyzes the 6-electron reduction of sulfite to sulfide. This is one of several activities required for the biosynthesis of L-cysteine from sulfate. The flavoprotein component catalyzes the electron flow from NADPH -&gt; FAD -&gt; FMN to the hemoprotein component. This chain is Sulfite reductase [NADPH] flavoprotein alpha-component, found in Serratia proteamaculans (strain 568).